We begin with the raw amino-acid sequence, 490 residues long: Sulfate adenylyltransferase (490 aa).

Positions 1-165 (MTKALLKDLN…LQAVTPIRHF (165 aa)) are N-terminal. The tract at residues 166-390 (DFVEYRYSPA…LRQSYPPKYS (225 aa)) is catalytic. Gln193 is a sulfate binding site. Residues 193 to 196 (QTRN) and 287 to 290 (GRDH) contribute to the ATP site. Active-site residues include Thr194, Arg195, and Asn196. Arg195 serves as a coordination point for sulfate. Ala291 lines the sulfate pocket. Met329 lines the ATP pocket. Thr356 is modified (phosphothreonine). The segment at 391-490 (QGFVLAVPAT…LSQLSDEGYL (100 aa)) is required for oligomerization; adenylyl-sulfate kinase-like.

This sequence belongs to the sulfate adenylyltransferase family. Homohexamer. Dimer of trimers.

Its subcellular location is the cytoplasm. It catalyses the reaction sulfate + ATP + H(+) = adenosine 5'-phosphosulfate + diphosphate. The protein operates within sulfur metabolism; hydrogen sulfide biosynthesis; sulfite from sulfate: step 1/3. Catalyzes the first intracellular reaction of sulfate assimilation, forming adenosine-5'-phosphosulfate (APS) from inorganic sulfate and ATP. Plays an important role in sulfate activation as a component of the biosynthesis pathway of sulfur-containing amino acids. In Schizosaccharomyces pombe (strain 972 / ATCC 24843) (Fission yeast), this protein is Sulfate adenylyltransferase (sua1).